We begin with the raw amino-acid sequence, 332 residues long: Trace amine-associated receptor 1 (332 aa).

At 1 to 23 the chain is on the extracellular side; the sequence is MHLCHAITNISHRNSDWSREVQA. Asparagine 9 carries N-linked (GlcNAc...) asparagine glycosylation. Residues 24–48 traverse the membrane as a helical segment; the sequence is SLYSLMSLIILATLVGNLIVIISIS. Topologically, residues 49–58 are cytoplasmic; sequence HFKQLHTPTN. The chain crosses the membrane as a helical span at residues 59-80; it reads WLLHSMAIVDFLLGCLIMPCSM. Topologically, residues 81 to 95 are extracellular; it reads VRTVERCWYFGEILC. A disulfide bridge connects residues cysteine 95 and cysteine 181. Residues 96 to 118 form a helical membrane-spanning segment; sequence KVHTSTDIMLSSASIFHLAFISI. Aspartate 102 is a 2-phenylethylamine binding site. Topologically, residues 119–138 are cytoplasmic; it reads DRYCAVCDPLRYKAKINIST. The helical transmembrane segment at 139–160 threads the bilayer; the sequence is ILVMILVSWSLPAVYAFGMIFL. The Extracellular portion of the chain corresponds to 161–187; sequence ELNLKGVEELYRSQVSDLGGCSPFFSK. Residues 174-185 are extracellular Loop 2 (ECL2); the sequence is QVSDLGGCSPFF. Residues 188–210 form a helical membrane-spanning segment; the sequence is VSGVLAFMTSFYIPGSVMLFVYY. The Cytoplasmic portion of the chain corresponds to 211-246; the sequence is RIYFIAKGQARSINRTNVQVGLEGKSQAPQSKETKA. A helical membrane pass occupies residues 247–270; that stretch reads AKTLGIMVGVFLVCWCPFFLCTVL. Residues 271–283 lie on the Extracellular side of the membrane; sequence DPFLGYVIPPSLN. Residues 284 to 304 form a helical membrane-spanning segment; it reads DALYWFGYLNSALNPMVYAFF. Residues 305–332 lie on the Cytoplasmic side of the membrane; the sequence is YPWFRRALKMVLLGKIFQKDSSRSKLFL.

This sequence belongs to the G-protein coupled receptor 1 family. As to expression, widely distributed throughout the brain. Strongly expressed in the mitral cell layer of the olfactory bulb, piriform cortex, the arcuate, motor, and mesencephalic trigeminal nuclei, lateral reticular and hypoglossal nuclei, cerebellar Purkinje cells, and ventral horn of the spinal cord. Moderately expressed in the frontal, entorhinal, and agranular cortices, the ventral pallidum, thalamus, hippocampus, several hypothalamic nuclei, ambiguus, dorsal raphe, and gigantocellular reticular nuclei. Weakly expressed in the septum, basal ganglia, amygdala, myelencephalon, and spinal cord dorsal horn. Particularly interesting is the moderate expression in several monoaminergic cell groups, namely the dorsal raphe, the locus coeruleus, and the ventral tegmental area.

Its subcellular location is the endomembrane system. The protein resides in the endoplasmic reticulum membrane. It localises to the cell membrane. Its activity is regulated as follows. Activated by SEP-363856 small molecule: IHCH-7179 acts both as an agonist activator for HTR1A and TAAR1. Intracellular G-protein coupled receptor for trace amines, which recognizes endogenous amine-containing metabolites such as beta-phenylethylamine (beta-PEA), 3-iodothyronamine (T1AM), isoamylamine (IAA), cadaverine (CAD), cyclohexylamine (CHA), p-tyramine (p-TYR), trimethylamine (TMA), octopamine and tryptamine. Also functions as a receptor for various drugs and psychoactive substances, such as amphetamine and methamphetamine. Unresponsive to classical biogenic amines, such as epinephrine and histamine and only partially activated by dopamine and serotonin. Expressed in both the central and peripheral nervous system: TAAR1 activation regulates the activity of several neurotransmitter signaling pathways by (1) decreasing the basal firing rates of the neurons involved and by (2) lowering the sensitivity of receptors to neurotransmitters. Ligand binding causes a conformation change that triggers signaling via guanine nucleotide-binding proteins (G proteins) and modulates the activity of downstream effectors. TAAR1 is coupled with different G(i)/G(o)-, G(s)- or G(q)/G(11) classes of G alpha proteins depending on the ligand. CAD-binding is coupled to G(i)/G(o) G alpha proteins and mediates inhibition of adenylate cyclase activity. T1AM- or beta-PEA-binding is coupled to G(s) G alpha proteins and mediates activation of adenylate cyclase activity. CHA- or IAA-binding is coupled to G(q)/G(11) G alpha proteins and activates phospholipase C-beta, releasing diacylglycerol (DAG) and inositol 1,4,5-trisphosphate (IP3) second messengers. TMA-binding is coupled with all three G(i)/G(o)-, G(s)- or G(q)/G(11) G alpha protein subtypes. In Mus musculus (Mouse), this protein is Trace amine-associated receptor 1.